A 245-amino-acid chain; its full sequence is tRNA1(Val) (adenine(37)-N6)-methyltransferase (245 aa).

It belongs to the methyltransferase superfamily. tRNA (adenine-N(6)-)-methyltransferase family.

The protein localises to the cytoplasm. It catalyses the reaction adenosine(37) in tRNA1(Val) + S-adenosyl-L-methionine = N(6)-methyladenosine(37) in tRNA1(Val) + S-adenosyl-L-homocysteine + H(+). Functionally, specifically methylates the adenine in position 37 of tRNA(1)(Val) (anticodon cmo5UAC). The polypeptide is tRNA1(Val) (adenine(37)-N6)-methyltransferase (Klebsiella pneumoniae subsp. pneumoniae (strain ATCC 700721 / MGH 78578)).